The primary structure comprises 363 residues: S-adenosylmethionine:tRNA ribosyltransferase-isomerase (363 aa).

This sequence belongs to the QueA family. In terms of assembly, monomer.

It is found in the cytoplasm. It carries out the reaction 7-aminomethyl-7-carbaguanosine(34) in tRNA + S-adenosyl-L-methionine = epoxyqueuosine(34) in tRNA + adenine + L-methionine + 2 H(+). Its pathway is tRNA modification; tRNA-queuosine biosynthesis. In terms of biological role, transfers and isomerizes the ribose moiety from AdoMet to the 7-aminomethyl group of 7-deazaguanine (preQ1-tRNA) to give epoxyqueuosine (oQ-tRNA). This chain is S-adenosylmethionine:tRNA ribosyltransferase-isomerase, found in Haemophilus influenzae (strain 86-028NP).